A 183-amino-acid chain; its full sequence is Peptide deformylase (183 aa).

Positions 110 and 153 each coordinate Fe cation. The active site involves glutamate 154. Histidine 157 serves as a coordination point for Fe cation.

The protein belongs to the polypeptide deformylase family. Fe(2+) is required as a cofactor.

It carries out the reaction N-terminal N-formyl-L-methionyl-[peptide] + H2O = N-terminal L-methionyl-[peptide] + formate. Its function is as follows. Removes the formyl group from the N-terminal Met of newly synthesized proteins. Requires at least a dipeptide for an efficient rate of reaction. N-terminal L-methionine is a prerequisite for activity but the enzyme has broad specificity at other positions. The protein is Peptide deformylase of Oceanobacillus iheyensis (strain DSM 14371 / CIP 107618 / JCM 11309 / KCTC 3954 / HTE831).